Consider the following 184-residue polypeptide: Peptide deformylase (184 aa).

Residues Cys111 and His154 each contribute to the Fe cation site. Glu155 is an active-site residue. Residue His158 coordinates Fe cation.

It belongs to the polypeptide deformylase family. The cofactor is Fe(2+).

It catalyses the reaction N-terminal N-formyl-L-methionyl-[peptide] + H2O = N-terminal L-methionyl-[peptide] + formate. In terms of biological role, removes the formyl group from the N-terminal Met of newly synthesized proteins. Requires at least a dipeptide for an efficient rate of reaction. N-terminal L-methionine is a prerequisite for activity but the enzyme has broad specificity at other positions. The polypeptide is Peptide deformylase (Lactobacillus gasseri (strain ATCC 33323 / DSM 20243 / BCRC 14619 / CIP 102991 / JCM 1131 / KCTC 3163 / NCIMB 11718 / NCTC 13722 / AM63)).